The sequence spans 893 residues: TBC domain-containing protein kinase-like protein (893 aa).

A Protein kinase domain is found at 1-274 (MFPLRDTEMG…EELMHDHLFS (274 aa)). Residues 466 to 651 (DIPPLLRGIT…HLWDTLLLGN (186 aa)) enclose the Rab-GAP TBC domain. A Rhodanese domain is found at 790-889 (SKPKLLVVDI…IKPTGLLTVP (100 aa)).

This sequence belongs to the protein kinase superfamily. As to quaternary structure, component of the FERRY complex.

Its subcellular location is the cytoplasm. It localises to the cytoskeleton. The protein localises to the spindle. The protein resides in the midbody. It is found in the early endosome. Component of the FERRY complex (Five-subunit Endosomal Rab5 and RNA/ribosome intermediary). The FERRY complex directly interacts with mRNAs and RAB5A, and functions as a RAB5A effector involved in the localization and the distribution of specific mRNAs most likely by mediating their endosomal transport. The complex recruits mRNAs and ribosomes to early endosomes through direct mRNA-interaction. Also involved in the modulation of mTOR signaling and expression of mTOR complex components. Involved in the control of actin-cytoskeleton organization. The polypeptide is TBC domain-containing protein kinase-like protein (Gallus gallus (Chicken)).